A 55-amino-acid polypeptide reads, in one-letter code: Large ribosomal subunit protein bL33 (55 aa).

Belongs to the bacterial ribosomal protein bL33 family.

The polypeptide is Large ribosomal subunit protein bL33 (Clavibacter sepedonicus (Clavibacter michiganensis subsp. sepedonicus)).